A 283-amino-acid chain; its full sequence is Pantothenate synthetase (283 aa).

Met-33 to His-40 contacts ATP. His-40 serves as the catalytic Proton donor. Gln-64 is a binding site for (R)-pantoate. Gln-64 provides a ligand contact to beta-alanine. Position 150-153 (Gly-150–Asp-153) interacts with ATP. Gln-156 is a binding site for (R)-pantoate. Residues Ile-179 and Met-187–Arg-190 each bind ATP.

Belongs to the pantothenate synthetase family. As to quaternary structure, homodimer.

The protein resides in the cytoplasm. The catalysed reaction is (R)-pantoate + beta-alanine + ATP = (R)-pantothenate + AMP + diphosphate + H(+). It functions in the pathway cofactor biosynthesis; (R)-pantothenate biosynthesis; (R)-pantothenate from (R)-pantoate and beta-alanine: step 1/1. Its function is as follows. Catalyzes the condensation of pantoate with beta-alanine in an ATP-dependent reaction via a pantoyl-adenylate intermediate. The protein is Pantothenate synthetase of Mesorhizobium japonicum (strain LMG 29417 / CECT 9101 / MAFF 303099) (Mesorhizobium loti (strain MAFF 303099)).